A 142-amino-acid polypeptide reads, in one-letter code: Immunoglobulin omega chain (142 aa).

The first 19 residues, 1–19 (MAWTSVLLMLLAHLTGCGP), serve as a signal peptide directing secretion. The interval 20–41 (QPMVHQPPSASSSLGATIRLSC) is framework-1. C41 and C115 are joined by a disulfide. The complementarity-determining-1 stretch occupies residues 42–56 (TLSNDHNIGIYSIYW). Residues 57–70 (YQQRPGHPPRFLLR) form a framework-2 region. The tract at residues 71 to 81 (YFSHSDKHQGP) is complementarity-determining-2. The segment at 82-115 (DIPPRFSGSKDTARNLGYLSISELQPEDEAVYYC) is framework-3.

This sequence belongs to the immunoglobulin superfamily. As to expression, only expressed by pre-B-cells.

Associates with the Ig-mu chain to form a molecular complex that is expressed on the surface of pre-B-cells. This complex presumably regulates Ig gene rearrangements in the early steps of B-cell differentiation. The protein is Immunoglobulin omega chain of Mus musculus (Mouse).